We begin with the raw amino-acid sequence, 435 residues long: Serine--tRNA ligase (435 aa).

242 to 244 (TAE) contacts L-serine. An ATP-binding site is contributed by 273–275 (RSE). An L-serine-binding site is contributed by Glu-296. 360–363 (EISS) contributes to the ATP binding site. Ser-396 lines the L-serine pocket.

The protein belongs to the class-II aminoacyl-tRNA synthetase family. Type-1 seryl-tRNA synthetase subfamily. Homodimer. The tRNA molecule binds across the dimer.

It localises to the cytoplasm. The catalysed reaction is tRNA(Ser) + L-serine + ATP = L-seryl-tRNA(Ser) + AMP + diphosphate + H(+). It catalyses the reaction tRNA(Sec) + L-serine + ATP = L-seryl-tRNA(Sec) + AMP + diphosphate + H(+). It participates in aminoacyl-tRNA biosynthesis; selenocysteinyl-tRNA(Sec) biosynthesis; L-seryl-tRNA(Sec) from L-serine and tRNA(Sec): step 1/1. In terms of biological role, catalyzes the attachment of serine to tRNA(Ser). Is also able to aminoacylate tRNA(Sec) with serine, to form the misacylated tRNA L-seryl-tRNA(Sec), which will be further converted into selenocysteinyl-tRNA(Sec). This Vibrio atlanticus (strain LGP32) (Vibrio splendidus (strain Mel32)) protein is Serine--tRNA ligase.